We begin with the raw amino-acid sequence, 588 residues long: MEYAAIHHQPFSTDAYSYDGRTVHIKIRTKKGDADHIRFIWGDPYEYNDGKWSANEQPMRKIAATEMHDYWFAEVVPPFRRLQYAFVVTDDHEDIFFGSSGVCPYNEKTLETIHYYFKFPFVHEADTFQAPEWVKSTVWYQIFPERFANGREDLSPKNALPWGSKDPDVNDFFGGDLQGIVDKLDYLEDLGVNGIYLTPIFSAPSNHKYDTLDYFSIDPHFGDPELFRTLVSQLHQRGMRIMLDAVFNHIGSASPQWQDVVKNGDQSRYKDWFHIHSFPVTDDNYDRFAFTADMPKLNTANPEVQKYLLDIALYWIREFDIDGWRLDVANEVDHVFWKTFRQAVSTEKPDVYILGEIWHSAEPWLRGDEFHAAMNYPFTEPMIEYFADQTISASRMAHRVNAHLMNGMKQANEVMFNLLDSHDTKRLLTRCRNDEKKARALLAFMFAQTGSPCIYYGTEIGLNGENDPLCRKCMVWEKEKQNQDMLQFMKRLIALRKQENTLLTEGHLEWNLLDDKNDFISFSRTLDEKILIYFFNQGNVVQHVSLRELNIDRNKKICDAWTEQPLQHHDVIAVQPGEFLILSAAAPV.

Ca(2+) contacts are provided by Asn-149, Ser-155, Gly-174, and Asp-176. Residues His-249 and Arg-325 each coordinate substrate. The Nucleophile role is filled by Asp-327. Glu-356 acts as the Proton donor in catalysis. Residues 422 to 423 (HD), Asp-467, and Arg-471 each bind substrate.

Belongs to the glycosyl hydrolase 13 family. BbmA subfamily. As to quaternary structure, monomer or homodimer; in equilibrium. It depends on Ca(2+) as a cofactor.

Its subcellular location is the cytoplasm. Functionally, hydrolyzes beta-cyclodextrin to maltose and glucose, soluble starch to maltose and glucose, and pullulan to panose with trace amounts of maltose and glucose. It is also able to hydrolyze acarbose. Can also exhibit a transglycosylation activity transferring glucose or maltose to another moiety of sugars by forming alpha-(1,6)- and alpha-(1,3)-glycosidic linkages upon the hydrolysis of substrate at concentrations of 5% or higher. The sequence is that of Intracellular maltogenic amylase (bbmA) from Bacillus subtilis (strain 168).